The primary structure comprises 66 residues: Type 3 secretion system chaperone YscE (66 aa).

It belongs to the YscE family. In terms of assembly, component of the heterodimeric YscE-YscG chaperone. The YscE-YscG chaperone forms a stable ternary complex with YscF/SctF. YscE interacts with YscG, but makes very little direct contact with YscF. Homodimer in solution.

The protein localises to the cytoplasm. Chaperone of the type III secretion system (T3SS), also called injectisome, which is used to inject bacterial effector proteins into eukaryotic host cells. Along with YscG, prevents premature polymerization of the YscF/SctF needle protein within the cytoplasm. Is also required for stable expression of cytosolic YscF and for YscF secretion. Likely plays a role in targeting YscF present in the cytosolic YscEFG complex to the T3SS apparatus. Required for Yop secretion. In Yersinia pestis, this protein is Type 3 secretion system chaperone YscE.